A 697-amino-acid chain; its full sequence is Portal protein (697 aa).

Positions 633–697 (MSREAAGGVP…RRAGGPYGFH (65 aa)) are disordered. Over residues 664-689 (ITADEERRGPERVGRFRNGGPDDPRR) the composition is skewed to basic and acidic residues.

The protein belongs to the herpesviridae portal protein family. In terms of assembly, homododecamerizes. Interacts with terminase subunits TRM1 and TRM3.

The protein localises to the virion. It is found in the host nucleus. Functionally, forms a portal in the viral capsid through which viral DNA is translocated during DNA packaging. Assembles as a dodecamer at a single fivefold axe of the T=16 icosahedric capsid. Binds to the molecular motor that translocates the viral DNA, termed terminase. This is Portal protein (UL104) from Homo sapiens (Human).